The chain runs to 949 residues: MTDSKYFTTTKKGEIFELKAELNSDKKEKKKEAVKKVIASMTVGKDVSALFPDVVNCMQTDNLELKKLVYLYLMNYAKSQPDMAIMAVNTFVKDCEDPNPLIRALAVRTMGCIRVDKITEYLCEPLRKCLKDEDPYVRKTAAVCVAKLHDINAQLVEDQGFLDTLKDLISDSNPMVVANAVAALSEIAESHPSSNLLDLNPQSINKLLTALNECTEWGQIFILDCLANYMPKDDREAQSICERVTPRLSHANSAVVLSAVKVLMKFMEMLSKDLDYYGTLLKKLAPPLVTLLSAEPELQYVALRNINLIVQKRPEILKHEMKVFFVKYNDPIYVKLEKLDIMIRLASQANIAQVLAELKEYATEVDVDFVRKAVRAIGRCAIKVEQSAERCVSTLLDLIQTKVNYVVQEAIVVIKDIFRKYPNKYESVIATLCENLDSLDEPEARAAMIWIVGEYAERIDNADELLESFLEGFHDESTQVQLQLLTAIVKLFLKKPTETQELVQQVLSLATQDSDNPDLRDRGYIYWRLLSTDPVAAKEVVLAEKPLISEETDLIEPTLLDELICYIGTLASVYHKPPSAFVEGGRGVVHKSLPPRTASSESAESPETAPTGAPPGEQPDVIPAQGDLLGDLLNLDLGPPVSGPPLATSSVQMGAVDLLGGGLDSLMGDEPEGIGGTNFVAPPTAAVPANLGAPIGSGLSDLFDLTSGVGTLSGSYVAPKAVWLPAMKAKGLEISGTFTRQVGSISMDLQLTNKALQVMTDFAIQFNRNSFGLAPAAPLQVHAPLSPNQTVEISLPLSTVGSVMKMEPLNNLQVAVKNNIDVFYFSTLYPLHILFVEDGKMDRQMFLATWKDIPNENEAQFQIRDCPLNAEAASSKLQSSNIFTVAKRNVEGQDMLYQSLKLTNGIWVLAELRIQPGNPSCTDLELSLKCRAPEVSQHVYQAYETILKN.

Lys-318 bears the N6-acetyllysine mark. Residue Tyr-574 is modified to 3'-nitrotyrosine. The tract at residues 584–625 is disordered; the sequence is GGRGVVHKSLPPRTASSESAESPETAPTGAPPGEQPDVIPAQ. The span at 594–611 shows a compositional bias: low complexity; that stretch reads PPRTASSESAESPETAPT.

Belongs to the adaptor complexes large subunit family. Adaptor protein complex 1 (AP-1) is a heterotetramer composed of two large adaptins (gamma-type subunit AP1G1 and beta-type subunit AP1B1), a medium adaptin (mu-type subunit AP1M1 or AP1M2) and a small adaptin (sigma-type subunit AP1S1 or AP1S2 or AP1S3). As to expression, widely expressed.

The protein localises to the golgi apparatus. It localises to the cytoplasmic vesicle. It is found in the clathrin-coated vesicle membrane. Functionally, subunit of clathrin-associated adaptor protein complex 1 that plays a role in protein sorting in the late-Golgi/trans-Golgi network (TGN) and/or endosomes. The AP complexes mediate both the recruitment of clathrin to membranes and the recognition of sorting signals within the cytosolic tails of transmembrane cargo molecules. This chain is AP-1 complex subunit beta-1 (AP1B1), found in Homo sapiens (Human).